The sequence spans 439 residues: MTALTRMKFPKRYVIVLLTFICTNVCYIERVGFSIAYTVAADAIGVNQANKGMILSMFYYGYVLSQIPGGWAAQRIGGRRVLLLSFVLWSLICGLIPLDPKREVILVLSRLFVGVAQGFIFPAIHTVLAQWVPPQERSRSVSLTTSGMYLGAAGGMLFFPSLVKHMGAQSVFFVEAVLGVAWSVIWLKFSSEPPRTDLPKVSMPKVASREKIKAQAGGVVAPRTVKIPWRRIIFSLPVWAIVVNNFTFHYALYVLMNWLPTYFELGLQLSLQDMGSSKMLPYFNMFIFSNIGGVVADHLITRRILSITKTRKLLNTIGFVVSAVALMALPLFRTPSGTVLCSSISLGFLALGRAGFAVNHMDVAPKFAGIVMGVSNTAGTLAGIVGVGLTGSILEGAKASNMDLTNSETWKTVFFVPGYLCIFSSIIFLIFSTGEKIFE.

The N-terminal stretch at 1 to 28 (MTALTRMKFPKRYVIVLLTFICTNVCYI) is a signal peptide. Transmembrane regions (helical) follow at residues 53–73 (MILS…GWAA), 81–101 (VLLL…LDPK), 104–124 (VILV…FPAI), 143–163 (LTTS…PSLV), 167–187 (GAQS…VIWL), 232–252 (IIFS…HYAL), 280–300 (LPYF…DHLI), 312–332 (KLLN…LPLF), 338–358 (TVLC…GFAV), 367–387 (FAGI…IVGV), and 412–432 (TVFF…LIFS).

Belongs to the major facilitator superfamily. Sodium/anion cotransporter (TC 2.A.1.14) family.

The protein resides in the cell membrane. In terms of biological role, probable anion transporter. This is Probable anion transporter 7 (PHT4;7) from Oryza sativa subsp. japonica (Rice).